Consider the following 129-residue polypeptide: Small ribosomal subunit protein uS11 (129 aa).

It belongs to the universal ribosomal protein uS11 family. Part of the 30S ribosomal subunit. Interacts with proteins S7 and S18. Binds to IF-3.

In terms of biological role, located on the platform of the 30S subunit, it bridges several disparate RNA helices of the 16S rRNA. Forms part of the Shine-Dalgarno cleft in the 70S ribosome. This is Small ribosomal subunit protein uS11 from Bacillus cereus (strain ATCC 14579 / DSM 31 / CCUG 7414 / JCM 2152 / NBRC 15305 / NCIMB 9373 / NCTC 2599 / NRRL B-3711).